A 445-amino-acid chain; its full sequence is MADRNEQILTPSQLNSLARDLLEGGFPLVWVEAELSSVTRPASGHLYFTLKDARAQIRCAMFKPKSTWLKFQPREGLRVLARGRLTLYEARGDYQLVLDHMEEAGEGALRRAFDELRARLTAEGLFDAERKQALPAHVRRLAVITSPSGAAVRDVLSVLARRFPLLEVDLLPSLVQGDSAAAQITSLLQRADASGRYDVILITRGGGSLEDLWAFNDERLARAIAAAQTPVVSAVGHETDFSLSDFVADVRAPTPSVAAELLVPDQRELVARVRRAQARMTQLQQHALGNAMQRADRLALRLRAQSPQARLQLLHRRQEDAGRQLRARMMHVLERLQARVQRGQAQLQSHNPQRHLAGLQQRLRALHPQAAMQRRLQHDQLQLRRIARSLEAVSPLATVARGYAIVTRPANGSVVRSAAEVVTGERLRAQLADGSIEVRVESGES.

Belongs to the XseA family. Heterooligomer composed of large and small subunits.

Its subcellular location is the cytoplasm. It carries out the reaction Exonucleolytic cleavage in either 5'- to 3'- or 3'- to 5'-direction to yield nucleoside 5'-phosphates.. In terms of biological role, bidirectionally degrades single-stranded DNA into large acid-insoluble oligonucleotides, which are then degraded further into small acid-soluble oligonucleotides. In Xanthomonas axonopodis pv. citri (strain 306), this protein is Exodeoxyribonuclease 7 large subunit.